Reading from the N-terminus, the 252-residue chain is uncharacterized protein (252 aa).

2 stretches are compositionally biased toward polar residues: residues 108 to 122 (RTTM…SSSE) and 136 to 153 (MPNT…NSQS). Residues 108 to 252 (RTTMRQGRFP…LIWNDSSSSK (145 aa)) form a disordered region. The span at 154–172 (TEKEDAMYSKDNGFEDRSK) shows a compositional bias: basic and acidic residues. The segment covering 201–226 (VKSTDSAFSGQENSEAFPSRTSNLGS) has biased composition (polar residues).

The protein localises to the cytoplasm. It is found in the mitochondrion. It localises to the nucleus. This is an uncharacterized protein from Schizosaccharomyces pombe (strain 972 / ATCC 24843) (Fission yeast).